We begin with the raw amino-acid sequence, 177 residues long: Large ribosomal subunit protein uL6 (177 aa).

It belongs to the universal ribosomal protein uL6 family. As to quaternary structure, part of the 50S ribosomal subunit.

In terms of biological role, this protein binds to the 23S rRNA, and is important in its secondary structure. It is located near the subunit interface in the base of the L7/L12 stalk, and near the tRNA binding site of the peptidyltransferase center. The sequence is that of Large ribosomal subunit protein uL6 from Klebsiella pneumoniae subsp. pneumoniae (strain ATCC 700721 / MGH 78578).